We begin with the raw amino-acid sequence, 822 residues long: Fibroblast growth factor receptor 1 (822 aa).

Residues 1–21 (MWGWKCLLFWAVLVTATLCTA) form the signal peptide. Over 22–376 (RPAPTLPEQA…AVMTSPLYLE (355 aa)) the chain is Extracellular. Residues 25 to 119 (PTLPEQAQPW…DTTYFSVNVS (95 aa)) form the Ig-like C2-type 1 domain. Cys55 and Cys101 are oxidised to a cystine. N-linked (GlcNAc...) asparagine glycans are attached at residues Asn77 and Asn117. The tract at residues 120–162 (DALPSSEDDDDDDDSSSEEKETDNTKPNRRPVAPYWTSPEKME) is disordered. Over residues 125–135 (SEDDDDDDDSS) the composition is skewed to acidic residues. Residues 136-145 (SEEKETDNTK) show a composition bias toward basic and acidic residues. Ig-like C2-type domains lie at 158–246 (PEKM…YQLD) and 255–357 (PILQ…AWLT). Residues 160–177 (KMEKKLHAVPAAKTVKFK) form a heparin-binding region. Residues Cys178 and Cys230 are joined by a disulfide bond. Residues Asn227, Asn240, Asn264, Asn296, Asn317, and Asn330 are each glycosylated (N-linked (GlcNAc...) asparagine). Cys277 and Cys341 are joined by a disulfide. A helical transmembrane segment spans residues 377-397 (IIIYCTGAFLISCMLGSVIIY). Topologically, residues 398 to 822 (KMKSGTKKSD…QLANSGLKRR (425 aa)) are cytoplasmic. Tyr463 carries the phosphotyrosine; by autocatalysis modification. One can recognise a Protein kinase domain in the interval 478–767 (LVLGKPLGEG…VALTSNQEYL (290 aa)). ATP contacts are provided by residues 484–490 (LGEGCFG), Lys514, 562–564 (EYA), and Asn568. Phosphotyrosine; by autocatalysis is present on residues Tyr583 and Tyr585. The active-site Proton acceptor is Asp623. 2 residues coordinate ATP: Arg627 and Asp641. Phosphotyrosine; by autocatalysis occurs at positions 653, 654, 730, and 766. The span at 782-792 (DTRSSTCSSGE) shows a compositional bias: polar residues. The segment at 782–822 (DTRSSTCSSGEDSVFSHEPLPEEPCLPRHPTQLANSGLKRR) is disordered.

The protein belongs to the protein kinase superfamily. Tyr protein kinase family. Fibroblast growth factor receptor subfamily. Monomer. Homodimer after ligand binding. Interacts predominantly with FGF1 and FGF2, but can also interact with FGF3, FGF4, FGF5, FGF6, FGF8, FGF10, FGF19, FGF21, FGF22 and FGF23 (in vitro). Ligand specificity is determined by tissue-specific expression of isoforms, and differences in the third Ig-like domain are crucial for ligand specificity. Affinity for fibroblast growth factors (FGFs) is increased by heparan sulfate glycosaminoglycans that function as coreceptors. Likewise, KLB increases the affinity for FGF19, FGF21 and FGF23. Interacts (phosphorylated on Tyr-766) with PLCG1 (via SH2 domains). Interacts with FRS2. Interacts with RPS6KA1. Interacts (via C-terminus) with NEDD4 (via WW3 domain). Interacts with KL. Interacts with SHB (via SH2 domain). Interacts with GRB10. Interacts with ANOS1; this interaction does not interfere with FGF2-binding to FGFR1, but prevents binding of heparin-bound FGF2. Interacts with SOX2 and SOX3. Interacts with FLRT1, FLRT2 and FLRT3. Found in a ternary complex with FGF1 and ITGAV:ITGB3. Autophosphorylated. Binding of FGF family members together with heparan sulfate proteoglycan or heparin promotes receptor dimerization and autophosphorylation on tyrosine residues. Autophosphorylation occurs in trans between the two FGFR molecules present in the dimer and proceeds in a highly ordered manner. Initial autophosphorylation at Tyr-653 increases the kinase activity by a factor of 50 to 100. After this, Tyr-583 becomes phosphorylated, followed by phosphorylation of Tyr-463, Tyr-766, Tyr-583 and Tyr-585. In a third stage, Tyr-654 is autophosphorylated, resulting in a further tenfold increase of kinase activity. Phosphotyrosine residues provide docking sites for interacting proteins and so are crucial for FGFR1 function and its regulation. Post-translationally, ubiquitinated. FGFR1 is rapidly ubiquitinated by NEDD4 after autophosphorylation, leading to internalization and lysosomal degradation. CBL is recruited to activated FGFR1 via FRS2 and GRB2, and mediates ubiquitination and subsequent degradation of FGFR1. In terms of processing, N-glycosylated in the endoplasmic reticulum. The N-glycan chains undergo further maturation to an Endo H-resistant form in the Golgi apparatus. In terms of tissue distribution, widely expressed.

The protein localises to the cell membrane. It is found in the nucleus. Its subcellular location is the cytoplasm. It localises to the cytosol. The protein resides in the cytoplasmic vesicle. It catalyses the reaction L-tyrosyl-[protein] + ATP = O-phospho-L-tyrosyl-[protein] + ADP + H(+). Present in an inactive conformation in the absence of bound ligand. Ligand binding leads to dimerization and activation by sequential autophosphorylation on tyrosine residues. Its function is as follows. Tyrosine-protein kinase that acts as a cell-surface receptor for fibroblast growth factors and plays an essential role in the regulation of embryonic development, cell proliferation, differentiation and migration. Required for normal mesoderm patterning and correct axial organization during embryonic development, normal skeletogenesis and normal development of the gonadotropin-releasing hormone (GnRH) neuronal system. Phosphorylates PLCG1, FRS2, GAB1 and SHB. Ligand binding leads to the activation of several signaling cascades. Activation of PLCG1 leads to the production of the cellular signaling molecules diacylglycerol and inositol 1,4,5-trisphosphate. Phosphorylation of FRS2 triggers recruitment of GRB2, GAB1, PIK3R1 and SOS1, and mediates activation of RAS, MAPK1/ERK2, MAPK3/ERK1 and the MAP kinase signaling pathway, as well as of the AKT1 signaling pathway. Promotes phosphorylation of SHC1, STAT1 and PTPN11/SHP2. In the nucleus, enhances RPS6KA1 and CREB1 activity and contributes to the regulation of transcription. FGFR1 signaling is down-regulated by IL17RD/SEF, and by FGFR1 ubiquitination, internalization and degradation. This chain is Fibroblast growth factor receptor 1 (Fgfr1), found in Mus musculus (Mouse).